The following is a 102-amino-acid chain: ATP-dependent Clp protease adapter protein ClpS (102 aa).

Belongs to the ClpS family. As to quaternary structure, binds to the N-terminal domain of the chaperone ClpA.

In terms of biological role, involved in the modulation of the specificity of the ClpAP-mediated ATP-dependent protein degradation. The chain is ATP-dependent Clp protease adapter protein ClpS from Shewanella halifaxensis (strain HAW-EB4).